We begin with the raw amino-acid sequence, 117 residues long: Early E3 13.3 kDa protein (117 aa).

The sequence is that of Early E3 13.3 kDa protein from Canine adenovirus serotype 1 (strain Glaxo) (CAdV-1).